Here is a 238-residue protein sequence, read N- to C-terminus: tRNA (guanine-N(7)-)-methyltransferase (238 aa).

S-adenosyl-L-methionine-binding residues include E68, E93, D120, and D143. D143 is an active-site residue. Residues K147, D179, and 216 to 219 (TKFE) contribute to the substrate site.

This sequence belongs to the class I-like SAM-binding methyltransferase superfamily. TrmB family.

It carries out the reaction guanosine(46) in tRNA + S-adenosyl-L-methionine = N(7)-methylguanosine(46) in tRNA + S-adenosyl-L-homocysteine. The protein operates within tRNA modification; N(7)-methylguanine-tRNA biosynthesis. Functionally, catalyzes the formation of N(7)-methylguanine at position 46 (m7G46) in tRNA. In Marinobacter nauticus (strain ATCC 700491 / DSM 11845 / VT8) (Marinobacter aquaeolei), this protein is tRNA (guanine-N(7)-)-methyltransferase.